Consider the following 551-residue polypeptide: Translocated intimin receptor Tir (551 aa).

2 stretches are compositionally biased toward low complexity: residues Met-1–Leu-15 and Asp-212–Arg-229. Disordered regions lie at residues Met-1 to Gln-36 and Asp-186 to Arg-229. Topologically, residues Met-1 to Lys-233 are cytoplasmic. Residues Phe-234–Thr-254 traverse the membrane as a helical segment. Residues Gln-255–Ser-362 are Extracellular-facing. The disordered stretch occupies residues Leu-259 to Gly-311. Residues Arg-283–Val-299 are compositionally biased toward polar residues. The chain crosses the membrane as a helical span at residues Gly-363–Thr-383. At Thr-384–Val-551 the chain is on the cytoplasmic side. Residues Arg-389–Val-450 are disordered. Residues Gln-395 to Thr-409 show a composition bias toward low complexity. Residues Ile-422–Gln-435 are compositionally biased toward basic and acidic residues. The span at Arg-436 to Val-450 shows a compositional bias: polar residues. Positions Asn-452–Tyr-454 match the Essential for actin pedestal formation motif.

It belongs to the Tir receptor family. In terms of assembly, interacts with intimin and host proteins. Phosphorylated by host kinases.

The protein localises to the secreted. It is found in the host cell membrane. Its function is as follows. Multifunctional protein that is required for efficient pedestal formation in host epithelial cells during infection. The extracellular region acts as a receptor for bacterial intimin, allowing the bacterium to attach tightly to the host-cell surface. Simultaneously, the intracellular region initiates a signaling cascade in the host cell, which leads to actin polymerization and formation of actin pedestals at the sites of bacterial adhesion. The protein is Translocated intimin receptor Tir (tir) of Escherichia coli O111:H- (strain 11128 / EHEC).